The primary structure comprises 166 residues: Endoribonuclease YbeY (166 aa).

Residues histidine 132, histidine 136, and histidine 142 each contribute to the Zn(2+) site.

It belongs to the endoribonuclease YbeY family. The cofactor is Zn(2+).

It localises to the cytoplasm. Functionally, single strand-specific metallo-endoribonuclease involved in late-stage 70S ribosome quality control and in maturation of the 3' terminus of the 16S rRNA. In Clostridium botulinum (strain Alaska E43 / Type E3), this protein is Endoribonuclease YbeY.